Consider the following 304-residue polypeptide: Germ cell-specific gene 1-like protein (304 aa).

Residues 1 to 8 (MKTTRKCR) lie on the Cytoplasmic side of the membrane. A helical membrane pass occupies residues 9-29 (ALLSVGLNLLALLFSTTAFIT). Topologically, residues 30-112 (TYWCEGTQRV…FIDLAPASER (83 aa)) are extracellular. Residues 113–133 (GVLWLSVVSEVLYIMLLVVGF) traverse the membrane as a helical segment. Residues 134–153 (SLMCLELFHSSNVIDGLKLN) are Cytoplasmic-facing. Residues 154–174 (AFAAVFTVLSGLLGMVAHMMY) traverse the membrane as a helical segment. At 175 to 197 (TQVFQITVSLGPEDWRPHTWDYG) the chain is on the extracellular side. Residues 198–218 (WSFCMAWGSFTCCMAASVTTL) traverse the membrane as a helical segment. Residues 219–304 (NSYTKTVIEF…NTESLGEEQC (86 aa)) lie on the Cytoplasmic side of the membrane. Over residues 266-278 (VDVYPSHGSSHGN) the composition is skewed to polar residues. Residues 266–304 (VDVYPSHGSSHGNSRGKMRSPPAPVDQGDNTESLGEEQC) form a disordered region.

It belongs to the GSG1 family. As to quaternary structure, component of the AMPAR complex.

It localises to the cell membrane. Its subcellular location is the synapse. Its function is as follows. As a component of the AMPAR complex, modifies AMPA receptor (AMPAR) gating. The sequence is that of Germ cell-specific gene 1-like protein (gsg1l) from Danio rerio (Zebrafish).